The sequence spans 202 residues: Dephospho-CoA kinase (202 aa).

The 197-residue stretch at 6–202 folds into the DPCK domain; the sequence is KISVTGDPSS…QCFKALKGTI (197 aa). An ATP-binding site is contributed by 14 to 19; the sequence is SSGKTE.

Belongs to the CoaE family.

The protein resides in the cytoplasm. It carries out the reaction 3'-dephospho-CoA + ATP = ADP + CoA + H(+). Its pathway is cofactor biosynthesis; coenzyme A biosynthesis; CoA from (R)-pantothenate: step 5/5. Catalyzes the phosphorylation of the 3'-hydroxyl group of dephosphocoenzyme A to form coenzyme A. The polypeptide is Dephospho-CoA kinase (Chlamydia trachomatis serovar A (strain ATCC VR-571B / DSM 19440 / HAR-13)).